We begin with the raw amino-acid sequence, 145 residues long: Ribosome maturation factor RimP (145 aa).

The protein belongs to the RimP family.

The protein resides in the cytoplasm. Functionally, required for maturation of 30S ribosomal subunits. This chain is Ribosome maturation factor RimP, found in Borrelia garinii subsp. bavariensis (strain ATCC BAA-2496 / DSM 23469 / PBi) (Borreliella bavariensis).